The following is a 1381-amino-acid chain: MKAPTVLTPGILVLLFILVQRSNGECKEALTKSEMNVNMKYQLPNFTAETPIQNVVLHEHHIFLGATNYIYVLNEEDLQKVAEHRTGPVLEHPDCFPCQDCSSKANLSGGVWKDNINMALVVDTYYDDQLISCGSVNRGTCQRHVFPHNHTADIQSEVHCIFSPQTEEPSQCPDCVVSALGTKVLLSVKDRFLNFFVGNTINSSYFPDHSLHSISVRRLKETKDGFMFLTDQSYVDVLPEFRDSYPIKYVHAFESNNFIYFLTVQRETLNAQTFHTRIIRFCSINSALHSYMEMPLECILTEKRKKRSTKKEVFNILQAAYVSKPGAQLARQIGASLNDDILFGVFAQSKPDSAEPMDRSAVCAFPIKYVNDFFNKIVNKNNVRCLQHFYGPNHEHCFNRTFQRNLLGCEARRDEYRTEFTTALQRIDLFAGQFNKVLLTSISTFVKGDLTIANLGTSEGRFIQIVVSRSVPSTPHVNFLLDSHPVSPEVIVEHPLNQNGYTLVVTGKKITKIPLNGLGCRHFQSCSQCLSAPSFVQCGWCHDKCVRSEECSSGTWTQETCLPTIYRVFPTSAPLEGGTRLTICGWDFGFRRNNKFDLKKTRVLLGNESCTLTLSESTMNTLKCTVGPAMNEHFNMSIIISNTHGTTQYSTFSYVDPIITSISPRYGPMSGGTLLTLTGNYLNSGNSRHISIGGKTCTLKSVSNSILECYTPAQTISTEFPVKLKIDLANRETSIFSYREDPIVYEIHPTKSFISGGSTITGIGKNLNSVSVPRMVINLHEARRNFTVACQHRSNSEIICCTTPSLQQLNLQLPLKTKAFFMLDGILSKYFDLIYVHNPVFKPFEKPVMISMGNENVLEIKGNDIDPEAVKGEVLKVGNKSCENIHLHSEAVLCTVPSDLLKLNSELNIEWKQAISSTVLGKVIVQPDQNFTGLIAGVVSISIALLLLLGLFLWLKKRKQIKDLGSELVRYDARVHTPHLDRLVSARSVSPTTEMVSNESVDYRATFPEDQFPNSSQNGSCRQVQYPLTDMSPILTSGDSDISSPLLQNTVHIDLSALNPELVQAVQHVVIGPSSLIVHFNEVIGRGHFGCVYHGTLLDNDGKKIHCAVKSLNRITDIGEVSQFLTEGIIMKDFSHPNVLSLLGICLRSEGSPLVVLPYMKHGDLRNFIRNETHNPTVKDLIGFGLQVAKGMKYLASKKFVHRDLAARNCMLDEKFTVKVADFGLARDMYDKEYYSVHNKTGAKLPVKWMALESLQTQKFTTKSDVWSFGVLLWELMTRGAPPYPDVNTFDITVYLLQGRRLLQPEYCPDPLYEVMLKCWHPKAEMRPSFSELVSRISAIFSAFIGEHYVHVNATYVNVKCVAPYPSLLSSQDNADGEVDT.

Positions Met1–Gly24 are cleaved as a signal peptide. Topologically, residues Glu25 to Thr932 are extracellular. One can recognise a Sema domain in the interval Lys27–Leu515. Asn45 carries N-linked (GlcNAc...) asparagine glycosylation. Cystine bridges form between Cys95/Cys101, Cys98/Cys160, Cys133/Cys141, and Cys172/Cys175. N-linked (GlcNAc...) asparagine glycosylation occurs at Asn106. Residue Asn149 is glycosylated (N-linked (GlcNAc...) asparagine). A glycan (N-linked (GlcNAc...) asparagine) is linked at Asn202. Cystine bridges form between Cys298/Cys363 and Cys385/Cys397. N-linked (GlcNAc...) asparagine glycosylation occurs at Asn399. Intrachain disulfides connect Cys520-Cys538, Cys526-Cys561, Cys529-Cys545, and Cys541-Cys551. 3 consecutive IPT/TIG domains span residues Pro563–Val655, Pro657–Arg739, and Pro742–Val836. Thr582 is a glycosylation site (O-linked (Man) threonine). N-linked (GlcNAc...) asparagine glycans are attached at residues Asn607 and Asn635. 2 O-linked (Man) threonine glycosylation sites follow: Thr676 and Thr761. Residues Asn785, Asn879, and Asn930 are each glycosylated (N-linked (GlcNAc...) asparagine). A helical transmembrane segment spans residues Gly933 to Leu955. Over Lys956–Thr1381 the chain is Cytoplasmic. A Phosphoserine modification is found at Ser966. At Thr977 the chain carries Phosphothreonine. Ser990, Ser997, and Ser1000 each carry phosphoserine. Tyr1003 carries the post-translational modification Phosphotyrosine. In terms of domain architecture, Protein kinase spans Val1078 to Ile1345. ATP is bound by residues Ile1084–Val1092 and Lys1110. The Proton acceptor role is filled by Asp1204. Residues Leu1212 to Thr1381 form an interaction with RANBP9 region. Tyr1230 carries the post-translational modification Phosphotyrosine. 2 positions are modified to phosphotyrosine; by autocatalysis: Tyr1234 and Tyr1235. The residue at position 1289 (Thr1289) is a Phosphothreonine. The interaction with MUC20 stretch occupies residues Trp1320–Val1359. Phosphotyrosine; by autocatalysis is present on residues Tyr1349 and Tyr1356. Tyr1365 carries the phosphotyrosine modification.

This sequence belongs to the protein kinase superfamily. Tyr protein kinase family. Heterodimer made of an alpha chain (50 kDa) and a beta chain (145 kDa) which are disulfide linked. Binds PLXNB1. Interacts when phosphorylated with downstream effectors including STAT3, PIK3R1, SRC, PCLG1, GRB2 and GAB1. Interacts with SPSB1, SPSB2 and SPSB4. Interacts with INPP5D/SHIP1. When phosphorylated at Tyr-1356, interacts with INPPL1/SHIP2. Interacts with RANBP9 and RANBP10, as well as SPSB1, SPSB2, SPSB3 and SPSB4. SPSB1 binding occurs in the presence and in the absence of HGF, however HGF treatment has a positive effect on this interaction. Interacts with MUC20; prevents interaction with GRB2 and suppresses hepatocyte growth factor-induced cell proliferation. Interacts with GRB10. Interacts with PTPN1 and PTPN2. Interacts with tensin TNS3. Interacts (when phosphorylated) with tensin TNS4 (via SH2 domain); the interaction increases MET protein stability by inhibiting MET endocytosis and subsequent lysosomal degradation. In terms of processing, autophosphorylated in response to ligand binding on Tyr-1234 and Tyr-1235 in the kinase domain leading to further phosphorylation of Tyr-1349 and Tyr-1356 in the C-terminal multifunctional docking site. Dephosphorylated by PTPRJ at Tyr-1349 and Tyr-1365. Dephosphorylated by PTPN1 and PTPN2. Ubiquitinated. Ubiquitination by CBL regulates the receptor stability and activity through proteasomal degradation. Post-translationally, O-mannosylation of IPT/TIG domains by TMEM260 is required for protein maturation. O-mannosylated residues are composed of single mannose glycans that are not elongated or modified.

The protein localises to the membrane. It carries out the reaction L-tyrosyl-[protein] + ATP = O-phospho-L-tyrosyl-[protein] + ADP + H(+). Its activity is regulated as follows. In its inactive state, the C-terminal tail interacts with the catalytic domain and inhibits the kinase activity. Upon ligand binding, the C-terminal tail is displaced and becomes phosphorylated, thus increasing the kinase activity. Receptor tyrosine kinase that transduces signals from the extracellular matrix into the cytoplasm by binding to hepatocyte growth factor/HGF ligand. Regulates many physiological processes including proliferation, scattering, morphogenesis and survival. Ligand binding at the cell surface induces autophosphorylation of MET on its intracellular domain that provides docking sites for downstream signaling molecules. Following activation by ligand, interacts with the PI3-kinase subunit PIK3R1, PLCG1, SRC, GRB2, STAT3 or the adapter GAB1. Recruitment of these downstream effectors by MET leads to the activation of several signaling cascades including the RAS-ERK, PI3 kinase-AKT, or PLCgamma-PKC. The RAS-ERK activation is associated with the morphogenetic effects while PI3K/AKT coordinates prosurvival effects. During embryonic development, MET signaling plays a role in gastrulation, development and migration of muscles and neuronal precursors, angiogenesis and kidney formation. In adults, participates in wound healing as well as organ regeneration and tissue remodeling. Also promotes differentiation and proliferation of hematopoietic cells. In Ateles geoffroyi (Black-handed spider monkey), this protein is Hepatocyte growth factor receptor (MET).